The chain runs to 140 residues: Large ribosomal subunit protein uL11 (140 aa).

It belongs to the universal ribosomal protein uL11 family. As to quaternary structure, part of the ribosomal stalk of the 50S ribosomal subunit. Interacts with L10 and the large rRNA to form the base of the stalk. L10 forms an elongated spine to which L12 dimers bind in a sequential fashion forming a multimeric L10(L12)X complex. In terms of processing, one or more lysine residues are methylated.

In terms of biological role, forms part of the ribosomal stalk which helps the ribosome interact with GTP-bound translation factors. This is Large ribosomal subunit protein uL11 from Geobacter sp. (strain M21).